We begin with the raw amino-acid sequence, 466 residues long: F-box/LRR-repeat protein fbxl-1 (466 aa).

The 47-residue stretch at 54–100 folds into the F-box domain; it reads SLINRVLPKEVLLKVFSFLDTKALCRSAQVCRSWSILALDGSNWQRV. 11 LRR repeats span residues 122 to 147, 148 to 173, 174 to 199, 200 to 225, 226 to 251, 252 to 277, 278 to 303, 304 to 329, 330 to 355, 356 to 381, and 408 to 433; these read GGFL…FTSR, CPNL…LGRY, CHKL…IGDG, CPNL…ILSN, CKSL…VEAH, MGAI…IANG, ATAL…LGQH, SHNL…LARG, CRQL…LANN, CTAL…LASK, and CKAL…FQHH.

As to quaternary structure, component of the SCF (SKP1-CUL1-F-box protein)-type E3 ubiquitin ligase complex. Expressed in neuroglial cells such as the socket cell and sheath cell, neurosecretory motor neurons and regions around the pharynx and anus.

It localises to the perikaryon. It is found in the cell projection. Its subcellular location is the dendrite. The protein localises to the cilium. The protein resides in the axon. In terms of biological role, substrate-recognition component of the SCF (SKP1-CUL1-F-box protein)-type E3 ubiquitin ligase complex. Plays a role in regulating the entry into the dauer state. In hermaphrodites, may play a role in modulating the rate of defecation. The protein is F-box/LRR-repeat protein fbxl-1 of Caenorhabditis elegans.